Consider the following 277-residue polypeptide: Probable CCR4-associated factor 1 homolog 10 (277 aa).

4 residues coordinate a divalent metal cation: D40, E42, D166, and D235.

This sequence belongs to the CAF1 family. Component of the CCR4-NOT complex, at least composed of CRR4 and CAF1 proteins. Requires a divalent metal cation as cofactor.

It localises to the nucleus. The protein resides in the cytoplasm. The catalysed reaction is Exonucleolytic cleavage of poly(A) to 5'-AMP.. Ubiquitous transcription factor required for a diverse set of processes. It is a component of the CCR4 complex involved in the control of gene expression. This is Probable CCR4-associated factor 1 homolog 10 (CAF1-10) from Arabidopsis thaliana (Mouse-ear cress).